Here is a 101-residue protein sequence, read N- to C-terminus: Putative regulatory protein Csac_2087 (101 aa).

This sequence belongs to the RemA family.

The chain is Putative regulatory protein Csac_2087 from Caldicellulosiruptor saccharolyticus (strain ATCC 43494 / DSM 8903 / Tp8T 6331).